The following is a 752-amino-acid chain: Primary amine oxidase (752 aa).

A signal peptide spans 1-27; that stretch reads MAILSPRKTALALAVALSCAWQSPAFA. Residues 408–419 and 490–495 contribute to the substrate site; these read YLDSGDYGMGTL and VGNYDY. Asp410 functions as the Proton acceptor in the catalytic mechanism. Catalysis depends on Tyr493, which acts as the Schiff-base intermediate with substrate; via topaquinone. Residue Tyr493 is modified to 2',4',5'-topaquinone. Cu cation-binding residues include His551 and His553. Positions 560, 561, 562, 600, 694, 697, 699, and 705 each coordinate Ca(2+). Asp560 is a binding site for Mn(2+). A Mn(2+)-binding site is contributed by Asp562. Asp705 is a Mn(2+) binding site. Cu cation is bound at residue His716.

The protein belongs to the copper/topaquinone oxidase family. Homodimer. Cu cation is required as a cofactor. Requires Ca(2+) as cofactor. It depends on L-topaquinone as a cofactor. The cofactor is Mn(2+). In terms of processing, topaquinone (TPQ) is generated by copper-dependent autoxidation of a specific tyrosyl residue.

The protein localises to the periplasm. The enzyme catalyses a primary methyl amine + O2 + H2O = an aldehyde + H2O2 + NH4(+). Functionally, active on tyramine, tryptamine, beta-phenethylamine and dopamine. In Klebsiella michiganensis (strain ATCC 8724 / DSM 4798 / JCM 20051 / NBRC 3318 / NRRL B-199 / KCTC 1686 / BUCSAV 143 / CCM 1901), this protein is Primary amine oxidase (maoA).